The following is a 157-amino-acid chain: DNA gyrase inhibitor (157 aa).

This sequence belongs to the DNA gyrase inhibitor family. In terms of assembly, interacts with DNA gyrase.

Its subcellular location is the cytoplasm. Inhibits the supercoiling activity of DNA gyrase. Acts by inhibiting DNA gyrase at an early step, prior to (or at the step of) binding of DNA by the gyrase. It protects cells against toxins that target DNA gyrase, by inhibiting activity of these toxins and reducing the formation of lethal double-strand breaks in the cell. This chain is DNA gyrase inhibitor, found in Klebsiella pneumoniae (strain 342).